Reading from the N-terminus, the 156-residue chain is ATP synthase subunit b (156 aa).

Residues Leu5 to Val25 form a helical membrane-spanning segment.

Belongs to the ATPase B chain family. As to quaternary structure, F-type ATPases have 2 components, F(1) - the catalytic core - and F(0) - the membrane proton channel. F(1) has five subunits: alpha(3), beta(3), gamma(1), delta(1), epsilon(1). F(0) has three main subunits: a(1), b(2) and c(10-14). The alpha and beta chains form an alternating ring which encloses part of the gamma chain. F(1) is attached to F(0) by a central stalk formed by the gamma and epsilon chains, while a peripheral stalk is formed by the delta and b chains.

The protein resides in the cell inner membrane. Its function is as follows. F(1)F(0) ATP synthase produces ATP from ADP in the presence of a proton or sodium gradient. F-type ATPases consist of two structural domains, F(1) containing the extramembraneous catalytic core and F(0) containing the membrane proton channel, linked together by a central stalk and a peripheral stalk. During catalysis, ATP synthesis in the catalytic domain of F(1) is coupled via a rotary mechanism of the central stalk subunits to proton translocation. Component of the F(0) channel, it forms part of the peripheral stalk, linking F(1) to F(0). This is ATP synthase subunit b from Acinetobacter baumannii (strain AYE).